Reading from the N-terminus, the 503-residue chain is Methylthioalkylmalate synthase 3, chloroplastic (503 aa).

Residues 1-51 (MASLLLTSSSMITTSCRSMVLRSGLPIGSSFPSLRLTRPYDKATLFVSCCS) constitute a chloroplast transit peptide. Residues 85 to 359 (VRVLDTTLRD…YTKIDSRQIM (275 aa)) form the Pyruvate carboxyltransferase domain.

The protein belongs to the alpha-IPM synthase/homocitrate synthase family. The cofactor is Mn(2+). As to expression, highly expressed in roots, leaves, and siliques. Lower amounts in stems and flowers.

It localises to the plastid. The protein resides in the chloroplast. It carries out the reaction an omega-(methylsulfanyl)-2-oxoalkanoate + acetyl-CoA + H2O = a 2-(omega-methylsulfanyl)alkylmalate + CoA + H(+). Its activity is regulated as follows. Not activated by ATP. Its function is as follows. Determines the side chain length of aliphatic glucosinolate structures. Accepts all the omega-methylthio-2-oxoalkanoic acids needed to form the known C3 to C8 glucosinolates. Also able to convert pyruvate to citramalate, 2-oxoisovalerate to isopropylmalate, 4-methyl-2-oxopentanoate and 5-methyl-2-oxohexanoate for Leu-derived glucosinolates, 3-methyl-2-oxopentanoate for Ile-derived glucosinolates and phenylpyruvate to phenylethylglucosinolate. The polypeptide is Methylthioalkylmalate synthase 3, chloroplastic (MAM3) (Arabidopsis thaliana (Mouse-ear cress)).